We begin with the raw amino-acid sequence, 318 residues long: Acetyl-coenzyme A carboxylase carboxyl transferase subunit alpha (318 aa).

The 255-residue stretch at 41–295 (RLTTKSQELT…KRQLIADLGS (255 aa)) folds into the CoA carboxyltransferase C-terminal domain.

It belongs to the AccA family. As to quaternary structure, acetyl-CoA carboxylase is a heterohexamer composed of biotin carboxyl carrier protein (AccB), biotin carboxylase (AccC) and two subunits each of ACCase subunit alpha (AccA) and ACCase subunit beta (AccD).

The protein localises to the cytoplasm. The catalysed reaction is N(6)-carboxybiotinyl-L-lysyl-[protein] + acetyl-CoA = N(6)-biotinyl-L-lysyl-[protein] + malonyl-CoA. It functions in the pathway lipid metabolism; malonyl-CoA biosynthesis; malonyl-CoA from acetyl-CoA: step 1/1. Component of the acetyl coenzyme A carboxylase (ACC) complex. First, biotin carboxylase catalyzes the carboxylation of biotin on its carrier protein (BCCP) and then the CO(2) group is transferred by the carboxyltransferase to acetyl-CoA to form malonyl-CoA. In Idiomarina loihiensis (strain ATCC BAA-735 / DSM 15497 / L2-TR), this protein is Acetyl-coenzyme A carboxylase carboxyl transferase subunit alpha.